Reading from the N-terminus, the 129-residue chain is Small ribosomal subunit protein uS11 (129 aa).

Belongs to the universal ribosomal protein uS11 family. Part of the 30S ribosomal subunit. Interacts with proteins S7 and S18. Binds to IF-3.

Functionally, located on the platform of the 30S subunit, it bridges several disparate RNA helices of the 16S rRNA. Forms part of the Shine-Dalgarno cleft in the 70S ribosome. The sequence is that of Small ribosomal subunit protein uS11 from Hahella chejuensis (strain KCTC 2396).